A 109-amino-acid chain; its full sequence is Envelope small membrane protein (109 aa).

Over 1 to 11 the chain is Virion surface; sequence MTNLLNKSLEE. A helical membrane pass occupies residues 12 to 32; it reads NGSFLTAVYIFVGFVALYLLG. The Intravirion portion of the chain corresponds to 33-109; the sequence is RALQAFVQAA…QDVQRNKLYS (77 aa). The disordered stretch occupies residues 89-109; the sequence is NGWNNKNPANFQDVQRNKLYS. Positions 90–109 are enriched in polar residues; it reads GWNNKNPANFQDVQRNKLYS.

Belongs to the gammacoronaviruses E protein family. As to quaternary structure, homooligomer. Interacts with the M membrane protein in the budding compartment of the host cell, which is located between endoplasmic reticulum and the Golgi complex. The cytoplasmic tails of both proteins are important for this function. Interacts with Nucleoprotein.

It localises to the host Golgi apparatus membrane. Its function is as follows. Plays a central role in virus morphogenesis and assembly. Acts as a viroporin and self-assembles in host membranes forming pentameric protein-lipid pores that allow ion transport. Also plays a role in the induction of apoptosis. The protein is Envelope small membrane protein of Avian infectious bronchitis virus (strain KB8523) (IBV).